The chain runs to 1435 residues: Gag-Pol polyprotein (1435 aa).

Gly2 is lipidated: N-myristoyl glycine; by host. The tract at residues 7-31 (VLSGGKLDAWEKIRLRPGGKKKYRL) is interaction with Gp41. An interaction with host CALM1 region spans residues 8 to 43 (LSGGKLDAWEKIRLRPGGKKKYRLKHLVWASRELER). The tract at residues 12 to 19 (KLDAWEKI) is interaction with host AP3D1. The interval 14–33 (DAWEKIRLRPGGKKKYRLKH) is interaction with membrane phosphatidylinositol 4,5-bisphosphate and RNA. The Nuclear export signal motif lies at 16 to 22 (WEKIRLR). The Nuclear localization signal signature appears at 26–32 (KKKYRLK). The interaction with membrane phosphatidylinositol 4,5-bisphosphate stretch occupies residues 73 to 77 (EELKS). Positions 108 to 127 (QNKSQQKTQQAAADKEKDNK) are disordered. Residues 109–118 (NKSQQKTQQA) are compositionally biased toward polar residues. Phosphotyrosine; by host is present on Tyr132. An interaction with human PPIA/CYPA and NUP153 region spans residues 189–227 (NTVGGHQAAMQMLKDTINEEAAEWDRVHPVHAGPIPPGQ). Positions 277 to 363 (YSPVSILDIK…GGPSHKARVL (87 aa)) are dimerization/Multimerization of capsid protein p24. 2 CCHC-type zinc fingers span residues 391 to 408 (VKCF…NCRA) and 412 to 429 (KGCW…DCTE). Positions 445–482 (EARKFSPEQARTNSPTSRELRVRRGDDPLSEAGAAEGQ) are disordered. A compositionally biased stretch (basic and acidic residues) spans 462 to 471 (RELRVRRGDD). The interval 489–493 (PQITL) is dimerization of protease. The Peptidase A2 domain occupies 508–577 (REALLDTGAD…TPVNIIGRNI (70 aa)). The active-site For protease activity; shared with dimeric partner is the Asp513. Dimerization of protease stretches follow at residues 537–543 (GIGGFIK) and 576–588 (NILT…LNFP). The Reverse transcriptase domain maps to 631 to 821 (EGKISRIGPE…PPFLWMGYEL (191 aa)). Mg(2+)-binding residues include Asp697, Asp772, and Asp773. The RT 'primer grip' stretch occupies residues 814–822 (FLWMGYELH). Residues 985–1001 (WETWWTEYWQATWIPEW) carry the Tryptophan repeat motif motif. Residues 1021–1144 (IAGAETYYID…VDKLVSSGVR (124 aa)) enclose the RNase H type-1 domain. Mg(2+) is bound by residues Asp1030, Glu1065, Asp1085, and Asp1136. An Integrase-type zinc finger spans residues 1150 to 1191 (DGIDKAQEEHERYHNNWRAVASDFNLPPIVAKEIVASCDKCQ). Residues His1159, His1163, Cys1187, and Cys1190 each contribute to the Zn(2+) site. The Integrase catalytic domain maps to 1201–1351 (VDCSPGIWQL…SAGERIIDII (151 aa)). Positions 1211, 1263, and 1299 each coordinate Mg(2+). The segment at residues 1370-1417 (FRVYYRDSRDPIWKGPAKLLWKGEGAVVIQDNSEIKVVPRREAKIIRD) is a DNA-binding region (integrase-type).

Homotrimer; further assembles as hexamers of trimers. Interacts with gp41 (via C-terminus). Interacts with host CALM1; this interaction induces a conformational change in the Matrix protein, triggering exposure of the myristate group. Interacts with host AP3D1; this interaction allows the polyprotein trafficking to multivesicular bodies during virus assembly. Part of the pre-integration complex (PIC) which is composed of viral genome, matrix protein, Vpr and integrase. As to quaternary structure, homodimer; the homodimer further multimerizes as homohexamers or homopentamers. Interacts with human PPIA/CYPA; This interaction stabilizes the capsid. Interacts with human NUP153. Interacts with host PDZD8; this interaction stabilizes the capsid. Interacts with monkey TRIM5; this interaction destabilizes the capsid. In terms of assembly, homodimer, whose active site consists of two apposed aspartic acid residues. Heterodimer of p66 RT and p51 RT (RT p66/p51). Heterodimerization of RT is essential for DNA polymerase activity. The overall folding of the subdomains is similar in p66 RT and p51 RT but the spatial arrangements of the subdomains are dramatically different. As to quaternary structure, homodimer; possibly can form homotetramer. Part of the pre-integration complex (PIC) which is composed of viral genome, matrix protein, Vpr and integrase. Interacts with human SMARCB1/INI1 and human PSIP1/LEDGF isoform 1. Interacts with human KPNA3; this interaction might play a role in nuclear import of the pre-integration complex. Interacts with human NUP153; this interaction might play a role in nuclear import of the pre-integration complex. The cofactor is Mg(2+). Specific enzymatic cleavages by the viral protease yield mature proteins. The protease is released by autocatalytic cleavage. The polyprotein is cleaved during and after budding, this process is termed maturation. Proteolytic cleavage of p66 RT removes the RNase H domain to yield the p51 RT subunit. Nucleocapsid protein p7 might be further cleaved after virus entry. Post-translationally, tyrosine phosphorylated presumably in the virion by a host kinase. Phosphorylation is apparently not a major regulator of membrane association. In terms of processing, phosphorylated possibly by host MAPK1; this phosphorylation is necessary for Pin1-mediated virion uncoating. Methylated by host PRMT6, impairing its function by reducing RNA annealing and the initiation of reverse transcription.

It localises to the host cell membrane. The protein resides in the host endosome. It is found in the host multivesicular body. The protein localises to the virion membrane. Its subcellular location is the host nucleus. It localises to the host cytoplasm. The protein resides in the virion. The catalysed reaction is Specific for a P1 residue that is hydrophobic, and P1' variable, but often Pro.. The enzyme catalyses Endohydrolysis of RNA in RNA/DNA hybrids. Three different cleavage modes: 1. sequence-specific internal cleavage of RNA. Human immunodeficiency virus type 1 and Moloney murine leukemia virus enzymes prefer to cleave the RNA strand one nucleotide away from the RNA-DNA junction. 2. RNA 5'-end directed cleavage 13-19 nucleotides from the RNA end. 3. DNA 3'-end directed cleavage 15-20 nucleotides away from the primer terminus.. It catalyses the reaction 3'-end directed exonucleolytic cleavage of viral RNA-DNA hybrid.. It carries out the reaction DNA(n) + a 2'-deoxyribonucleoside 5'-triphosphate = DNA(n+1) + diphosphate. Its activity is regulated as follows. Protease: The viral protease is inhibited by many synthetic protease inhibitors (PIs), such as amprenavir, atazanavir, indinavir, loprinavir, nelfinavir, ritonavir and saquinavir. Use of protease inhibitors in tritherapy regimens permit more ambitious therapeutic strategies. Reverse transcriptase/ribonuclease H: RT can be inhibited either by nucleoside RT inhibitors (NRTIs) or by non nucleoside RT inhibitors (NNRTIs). NRTIs act as chain terminators, whereas NNRTIs inhibit DNA polymerization by binding a small hydrophobic pocket near the RT active site and inducing an allosteric change in this region. Classical NRTIs are abacavir, adefovir (PMEA), didanosine (ddI), lamivudine (3TC), stavudine (d4T), tenofovir (PMPA), zalcitabine (ddC), and zidovudine (AZT). Classical NNRTIs are atevirdine (BHAP U-87201E), delavirdine, efavirenz (DMP-266), emivirine (I-EBU), and nevirapine (BI-RG-587). The tritherapies used as a basic effective treatment of AIDS associate two NRTIs and one NNRTI. Mediates, with Gag polyprotein, the essential events in virion assembly, including binding the plasma membrane, making the protein-protein interactions necessary to create spherical particles, recruiting the viral Env proteins, and packaging the genomic RNA via direct interactions with the RNA packaging sequence (Psi). Gag-Pol polyprotein may regulate its own translation, by the binding genomic RNA in the 5'-UTR. At low concentration, the polyprotein would promote translation, whereas at high concentration, the polyprotein would encapsidate genomic RNA and then shut off translation. Its function is as follows. Targets the polyprotein to the plasma membrane via a multipartite membrane-binding signal, that includes its myristoylated N-terminus. Matrix protein is part of the pre-integration complex. Implicated in the release from host cell mediated by Vpu. Binds to RNA. Functionally, forms the conical core that encapsulates the genomic RNA-nucleocapsid complex in the virion. Most core are conical, with only 7% tubular. The core is constituted by capsid protein hexamer subunits. The core is disassembled soon after virion entry. Host restriction factors such as TRIM5-alpha or TRIMCyp bind retroviral capsids and cause premature capsid disassembly, leading to blocks in reverse transcription. Capsid restriction by TRIM5 is one of the factors which restricts HIV-1 to the human species. Host PIN1 apparently facilitates the virion uncoating. On the other hand, interactions with PDZD8 or CYPA stabilize the capsid. In terms of biological role, encapsulates and protects viral dimeric unspliced genomic RNA (gRNA). Binds these RNAs through its zinc fingers. Acts as a nucleic acid chaperone which is involved in rearangement of nucleic acid secondary structure during gRNA retrotranscription. Also facilitates template switch leading to recombination. As part of the polyprotein, participates in gRNA dimerization, packaging, tRNA incorporation and virion assembly. Aspartyl protease that mediates proteolytic cleavages of Gag and Gag-Pol polyproteins during or shortly after the release of the virion from the plasma membrane. Cleavages take place as an ordered, step-wise cascade to yield mature proteins. This process is called maturation. Displays maximal activity during the budding process just prior to particle release from the cell. Also cleaves Nef and Vif, probably concomitantly with viral structural proteins on maturation of virus particles. Hydrolyzes host EIF4GI and PABP1 in order to shut off the capped cellular mRNA translation. The resulting inhibition of cellular protein synthesis serves to ensure maximal viral gene expression and to evade host immune response. Also mediates cleavage of host YTHDF3. Mediates cleavage of host CARD8, thereby activating the CARD8 inflammasome, leading to the clearance of latent HIV-1 in patient CD4(+) T-cells after viral reactivation; in contrast, HIV-1 can evade CARD8-sensing when its protease remains inactive in infected cells prior to viral budding. Its function is as follows. Multifunctional enzyme that converts the viral RNA genome into dsDNA in the cytoplasm, shortly after virus entry into the cell. This enzyme displays a DNA polymerase activity that can copy either DNA or RNA templates, and a ribonuclease H (RNase H) activity that cleaves the RNA strand of RNA-DNA heteroduplexes in a partially processive 3' to 5' endonucleasic mode. Conversion of viral genomic RNA into dsDNA requires many steps. A tRNA(3)-Lys binds to the primer-binding site (PBS) situated at the 5'-end of the viral RNA. RT uses the 3' end of the tRNA primer to perform a short round of RNA-dependent minus-strand DNA synthesis. The reading proceeds through the U5 region and ends after the repeated (R) region which is present at both ends of viral RNA. The portion of the RNA-DNA heteroduplex is digested by the RNase H, resulting in a ssDNA product attached to the tRNA primer. This ssDNA/tRNA hybridizes with the identical R region situated at the 3' end of viral RNA. This template exchange, known as minus-strand DNA strong stop transfer, can be either intra- or intermolecular. RT uses the 3' end of this newly synthesized short ssDNA to perform the RNA-dependent minus-strand DNA synthesis of the whole template. RNase H digests the RNA template except for two polypurine tracts (PPTs) situated at the 5'-end and near the center of the genome. It is not clear if both polymerase and RNase H activities are simultaneous. RNase H probably can proceed both in a polymerase-dependent (RNA cut into small fragments by the same RT performing DNA synthesis) and a polymerase-independent mode (cleavage of remaining RNA fragments by free RTs). Secondly, RT performs DNA-directed plus-strand DNA synthesis using the PPTs that have not been removed by RNase H as primers. PPTs and tRNA primers are then removed by RNase H. The 3' and 5' ssDNA PBS regions hybridize to form a circular dsDNA intermediate. Strand displacement synthesis by RT to the PBS and PPT ends produces a blunt ended, linear dsDNA copy of the viral genome that includes long terminal repeats (LTRs) at both ends. Functionally, catalyzes viral DNA integration into the host chromosome, by performing a series of DNA cutting and joining reactions. This enzyme activity takes place after virion entry into a cell and reverse transcription of the RNA genome in dsDNA. The first step in the integration process is 3' processing. This step requires a complex comprising the viral genome, matrix protein, Vpr and integrase. This complex is called the pre-integration complex (PIC). The integrase protein removes 2 nucleotides from each 3' end of the viral DNA, leaving recessed CA OH's at the 3' ends. In the second step, the PIC enters cell nucleus. This process is mediated through integrase and Vpr proteins, and allows the virus to infect a non dividing cell. This ability to enter the nucleus is specific of lentiviruses, other retroviruses cannot and rely on cell division to access cell chromosomes. In the third step, termed strand transfer, the integrase protein joins the previously processed 3' ends to the 5' ends of strands of target cellular DNA at the site of integration. The 5'-ends are produced by integrase-catalyzed staggered cuts, 5 bp apart. A Y-shaped, gapped, recombination intermediate results, with the 5'-ends of the viral DNA strands and the 3' ends of target DNA strands remaining unjoined, flanking a gap of 5 bp. The last step is viral DNA integration into host chromosome. This involves host DNA repair synthesis in which the 5 bp gaps between the unjoined strands are filled in and then ligated. Since this process occurs at both cuts flanking the HIV genome, a 5 bp duplication of host DNA is produced at the ends of HIV-1 integration. Alternatively, Integrase may catalyze the excision of viral DNA just after strand transfer, this is termed disintegration. The polypeptide is Gag-Pol polyprotein (gag-pol) (Homo sapiens (Human)).